Consider the following 147-residue polypeptide: MEKQSIRGKRRARKFALQALYQWLMSGTDLHEIEAQFRTINNMDKVDGEYFCRLLYGIPTHVEALEASLLPYLDREINALNPIELTVLRIGSFELFHCPEIPYKVILDESVSLTKEFGSQEGYRYVNGVLNNLAKQVRSVEVSLDNE.

It belongs to the NusB family.

Its function is as follows. Involved in transcription antitermination. Required for transcription of ribosomal RNA (rRNA) genes. Binds specifically to the boxA antiterminator sequence of the ribosomal RNA (rrn) operons. This Legionella pneumophila (strain Paris) protein is Transcription antitermination protein NusB.